The chain runs to 338 residues: Ketol-acid reductoisomerase (NADP(+)) (338 aa).

The KARI N-terminal Rossmann domain occupies 1 to 181 (MKVFYDKDCD…GGGRAGIIET (181 aa)). NADP(+)-binding positions include 24–27 (YGSQ), Arg-47, and Ser-52. The active site involves His-107. Gly-133 serves as a coordination point for NADP(+). The region spanning 182–327 (NFREETETDL…GKLRAMMPWI (146 aa)) is the KARI C-terminal knotted domain. Mg(2+) is bound by residues Asp-190, Glu-194, Glu-226, and Glu-230. Substrate is bound at residue Ser-251.

The protein belongs to the ketol-acid reductoisomerase family. The cofactor is Mg(2+).

The enzyme catalyses (2R)-2,3-dihydroxy-3-methylbutanoate + NADP(+) = (2S)-2-acetolactate + NADPH + H(+). The catalysed reaction is (2R,3R)-2,3-dihydroxy-3-methylpentanoate + NADP(+) = (S)-2-ethyl-2-hydroxy-3-oxobutanoate + NADPH + H(+). Its pathway is amino-acid biosynthesis; L-isoleucine biosynthesis; L-isoleucine from 2-oxobutanoate: step 2/4. The protein operates within amino-acid biosynthesis; L-valine biosynthesis; L-valine from pyruvate: step 2/4. Its function is as follows. Involved in the biosynthesis of branched-chain amino acids (BCAA). Catalyzes an alkyl-migration followed by a ketol-acid reduction of (S)-2-acetolactate (S2AL) to yield (R)-2,3-dihydroxy-isovalerate. In the isomerase reaction, S2AL is rearranged via a Mg-dependent methyl migration to produce 3-hydroxy-3-methyl-2-ketobutyrate (HMKB). In the reductase reaction, this 2-ketoacid undergoes a metal-dependent reduction by NADPH to yield (R)-2,3-dihydroxy-isovalerate. This chain is Ketol-acid reductoisomerase (NADP(+)), found in Bordetella pertussis (strain Tohama I / ATCC BAA-589 / NCTC 13251).